The chain runs to 310 residues: MAKIVVALGGNALGKSPQEQLELVKNTAKSLVGLITKGHEIVISHGNGPQVGSINLGLNYAAEHDQGPAFPFAECGAMSQAYIGYQLQESLQNELHSMGIDKQVVTLVTQVEVDEGDPAFNSPSKPIGLFYTKEEANRIQQEKGYQFVEDAGRGYRRVVPSPQPISIIELESIKTLVENDTLVIAAGGGGIPVIREQHDSFKGIDAVIDKDKTSALLGADIHCDQLIILTAIDYVYINYHTDQQQALKTTNIDTLKTYIEEEQFAKGSMLPKIESAISFIENNPNGSVLITSLNQLDAALEGKIGTLITK.

It belongs to the carbamate kinase family.

Its subcellular location is the cytoplasm. The catalysed reaction is hydrogencarbonate + NH4(+) + ATP = carbamoyl phosphate + ADP + H2O + H(+). The protein operates within metabolic intermediate metabolism; carbamoyl phosphate degradation; CO(2) and NH(3) from carbamoyl phosphate: step 1/1. The chain is Carbamate kinase (arcC) from Staphylococcus epidermidis (strain ATCC 35984 / DSM 28319 / BCRC 17069 / CCUG 31568 / BM 3577 / RP62A).